Here is a 255-residue protein sequence, read N- to C-terminus: uncharacterized protein (255 aa).

The signal sequence occupies residues 1–23 (MKRLNKLVLYISFLILVISFTAG). Cys24 carries the N-palmitoyl cysteine lipid modification. A lipid anchor (S-diacylglycerol cysteine) is attached at Cys24.

Belongs to the staphylococcal tandem lipoprotein family.

The protein resides in the cell membrane. This is an uncharacterized protein from Staphylococcus aureus (strain NCTC 8325 / PS 47).